The chain runs to 157 residues: MSSLCLQRLQEERKKWRKDHPFGFYAKPVKKADGSMDLQKWEAGIPGKEGTNWAGGVYPITVEYPNEYPSKPPKVKFPAGFYHPNVYPSGTICLSILNEDQDWRPAITLKQIVLGVQDLLDSPNPNSPAQEPAWRSFSRNKAEYDKKVLLQAKQYSK.

S2 bears the N-acetylserine mark. In terms of domain architecture, UBC core spans 4 to 157 (LCLQRLQEER…VLLQAKQYSK (154 aa)). C93 functions as the Glycyl thioester intermediate in the catalytic mechanism.

It belongs to the ubiquitin-conjugating enzyme family. In terms of assembly, interacts with SIZ1.

The protein resides in the nucleus. The protein operates within protein modification; protein sumoylation. Functionally, E2 ubiquitin-like--protein ligase mediating SUMO/Smt3 attachment to septins and PCNA. Seems to be involved in degradation of S- (CLB5) and M-phase cyclins (CLB2). The sequence is that of SUMO-conjugating enzyme UBC9 (UBC9) from Saccharomyces cerevisiae (strain ATCC 204508 / S288c) (Baker's yeast).